An 85-amino-acid chain; its full sequence is Large ribosomal subunit protein bL27 (85 aa).

Residues 1 to 22 (MAHKKGASSTRNGRDSNAQRLG) are disordered. Residues 7–19 (ASSTRNGRDSNAQ) show a composition bias toward polar residues.

It belongs to the bacterial ribosomal protein bL27 family.

The protein is Large ribosomal subunit protein bL27 (rpmA) of Streptomyces griseus.